A 369-amino-acid polypeptide reads, in one-letter code: MENSKKTPLFTVYEKHKGKLIDFGGWAMPVQFEGIIPEHEAVRSNAGLFDVSHMGEVEIKGKDALNFVQYLITNDASQMEKNQIIYSFMCYENGGVVDDLLVYKFEEDYFYLVINAGNIEKDYEWMLKQSTAYDVEVNNISNDVSELALQGPKAEKILQKLTETDLSQLQFFYLQRDVTIDGVNCLISRTGYTGEDGFEIYVNPSDAVQLWEKLLEVGQEDGLKPIGLGARDTLRFEAALPLYGHEINRDITPLEAGFGFAVKLKKEVDFLGKKALIEQKEAGLTRKLVGFEMKDRGIPRSDYEVYHQGEKIGFVTTGYFSPTLKRNIGLALIDAKYAELGNEVDILIRKKQVKAELISKTFYKKNYKK.

Belongs to the GcvT family. As to quaternary structure, the glycine cleavage system is composed of four proteins: P, T, L and H.

It carries out the reaction N(6)-[(R)-S(8)-aminomethyldihydrolipoyl]-L-lysyl-[protein] + (6S)-5,6,7,8-tetrahydrofolate = N(6)-[(R)-dihydrolipoyl]-L-lysyl-[protein] + (6R)-5,10-methylene-5,6,7,8-tetrahydrofolate + NH4(+). In terms of biological role, the glycine cleavage system catalyzes the degradation of glycine. The sequence is that of Aminomethyltransferase from Alkaliphilus metalliredigens (strain QYMF).